Consider the following 118-residue polypeptide: UPF0102 protein Swit_0572 (118 aa).

The protein belongs to the UPF0102 family.

This chain is UPF0102 protein Swit_0572, found in Rhizorhabdus wittichii (strain DSM 6014 / CCUG 31198 / JCM 15750 / NBRC 105917 / EY 4224 / RW1) (Sphingomonas wittichii).